Reading from the N-terminus, the 301-residue chain is Probable alpha-L-glutamate ligase (301 aa).

The ATP-grasp domain occupies 104–287 (LQLLSRKGVG…IAGMIIEYIE (184 aa)). ATP-binding positions include lysine 141, 178–179 (EY), aspartate 187, and 211–213 (RSN). 3 residues coordinate Mg(2+): aspartate 248, glutamate 260, and asparagine 262. Residues aspartate 248, glutamate 260, and asparagine 262 each contribute to the Mn(2+) site.

This sequence belongs to the RimK family. Mg(2+) is required as a cofactor. Requires Mn(2+) as cofactor.

This chain is Probable alpha-L-glutamate ligase, found in Photobacterium profundum (strain SS9).